The chain runs to 647 residues: MIKITFPDGAVREFESGVTTFDIAESISKSLAKKALAGKFNDQLIDTTRAIEEDGSIEIVTPDHKDAYEVLRHSAAHLFAQAAKRLFPNLHLGVGPAIAEGFYYDTDNAEGQISNEDLPCIEAEMQKIVTENYPCIREEVTKEEALELFKDDPYKVELINEHAGAGLTVYRQGEFVDLCRGPHVPSTGRIQVFHLLNVAGAYWRGNSDNNMMQRIYGTAWFDKKDLKAYLTRLEEAKERDHRKLGKELDLFMISQEVGQGLPFWLPDGATIRRTLERYITDKELASGYQHVYTPPLASVELYKTSGHWDHYQEDMFPVMDMGDGEEFVLRPMNCPHHIQVYKNHVRSYRELPIRIAELGMMHRYEKSGALSGLQRVREMTLNDGHIFVTPEQIQEEFQRALQLIIDVYADFNLTDYRFRLSYRDPNDTHKYYDNDEMWENAQSMLKAALDEMDVDYFEAEGEAAFYGPKLDIQVKTALGNEETLSTIQLDFLLPERFDLKYIGADGEEHRPVMIHRGVISTMERFTAILIETYKGAFPTWLAPHQVTVIPISNEAHIDYAWEVAKTLRDRGVRADVDDRNEKMQYKIRASQTSKIPYQLIVGDKEMEDKSVNVRRYGSKATHTESVEEFVENILADIARKSRPDAQA.

The TGS domain occupies 1-61 (MIKITFPDGA…EEDGSIEIVT (61 aa)). Positions 240-538 (DHRKLGKELD…LIETYKGAFP (299 aa)) are catalytic. 3 residues coordinate Zn(2+): cysteine 334, histidine 385, and histidine 515.

The protein belongs to the class-II aminoacyl-tRNA synthetase family. In terms of assembly, homodimer. The cofactor is Zn(2+).

Its subcellular location is the cytoplasm. It catalyses the reaction tRNA(Thr) + L-threonine + ATP = L-threonyl-tRNA(Thr) + AMP + diphosphate + H(+). Catalyzes the attachment of threonine to tRNA(Thr) in a two-step reaction: L-threonine is first activated by ATP to form Thr-AMP and then transferred to the acceptor end of tRNA(Thr). Also edits incorrectly charged L-seryl-tRNA(Thr). The sequence is that of Threonine--tRNA ligase from Streptococcus pyogenes serotype M2 (strain MGAS10270).